The primary structure comprises 80 residues: Acyl carrier protein (80 aa).

A Carrier domain is found at 2–77 (SDTLKRLQKI…DALNYIENKI (76 aa)). Serine 37 is modified (O-(pantetheine 4'-phosphoryl)serine).

Belongs to the acyl carrier protein (ACP) family. Post-translationally, 4'-phosphopantetheine is transferred from CoA to a specific serine of apo-ACP by AcpS. This modification is essential for activity because fatty acids are bound in thioester linkage to the sulfhydryl of the prosthetic group.

Its subcellular location is the plastid. The protein localises to the chloroplast. It functions in the pathway lipid metabolism; fatty acid biosynthesis. Carrier of the growing fatty acid chain in fatty acid biosynthesis. The sequence is that of Acyl carrier protein from Cylindrotheca sp. (strain N1) (Marine diatom).